Reading from the N-terminus, the 962-residue chain is Vacuolar membrane protease (962 aa).

The Cytoplasmic portion of the chain corresponds to 1 to 15; that stretch reads MVSSRRGFNPIAFTP. A helical transmembrane segment spans residues 16–36; the sequence is WPVTILSSLVYLALIIPIIVV. At 37-390 the chain is on the vacuolar side; the sequence is HHLVPPAPKE…FQLNTLFGHS (354 aa). N-linked (GlcNAc...) asparagine glycosylation is found at N110 and N113. Positions 169 and 181 each coordinate Zn(2+). The active-site Proton acceptor is the E215. Residues E216, E241, and H314 each coordinate Zn(2+). A helical transmembrane segment spans residues 391–411; the sequence is VALLVVAPLLLIITSVALFAV. Topologically, residues 412 to 440 are cytoplasmic; sequence DKMYMFSMYTYISESGGQVSLYGLRGMFR. Residues 441–461 form a helical membrane-spanning segment; the sequence is FPLILGISTALTIALAFLIMK. Residues 462-472 are Vacuolar-facing; sequence VNPFIIYSSPY. Residues 473–493 traverse the membrane as a helical segment; that stretch reads AVWSMMLSTCMFFAWFISCVA. At 494–503 the chain is on the cytoplasmic side; sequence DFARPSALHR. The helical transmembrane segment at 504 to 524 threads the bilayer; sequence AYSFSWMFGIMWVFLVIATVY. Over 525 to 534 the chain is Vacuolar; it reads QKQHGIASSY. Residues 535–555 traverse the membrane as a helical segment; sequence FIVFYFAGVAVATWISYLELF. Over 556 to 667 the chain is Cytoplasmic; sequence GLPKTQDYAR…WSIYLMSSAW (112 aa). The tract at residues 568-617 is disordered; sequence GRLSDRTPSSDSHFLAPSADELPSSSSAAGRDFNPEDVEDEEPTESTSLL. Acidic residues predominate over residues 602–611; it reads PEDVEDEEPT. A helical membrane pass occupies residues 668–688; that stretch reads ILQFLLVAPIVIILLGQLGLF. At 689–704 the chain is on the vacuolar side; sequence LTSATYQIGADGGSQL. A helical membrane pass occupies residues 705-725; sequence VIYIGIAVLSVLILLPLFPFI. The Cytoplasmic segment spans residues 726–731; it reads HRFTYH. Residues 732–752 form a helical membrane-spanning segment; that stretch reads IPTFLLFILIGTLVYNLTAFP. At 753–962 the chain is on the vacuolar side; it reads FSHSNRLKLA…LVEGSYSFKL (210 aa). N834 carries N-linked (GlcNAc...) asparagine glycosylation.

Belongs to the peptidase M28 family. It depends on Zn(2+) as a cofactor.

The protein localises to the vacuole membrane. May be involved in vacuolar sorting and osmoregulation. The protein is Vacuolar membrane protease of Arthroderma benhamiae (strain ATCC MYA-4681 / CBS 112371) (Trichophyton mentagrophytes).